A 602-amino-acid chain; its full sequence is DNA mismatch repair protein MutL (602 aa).

The tract at residues 337–367 is disordered; that stretch reads KRPFPGSSTNYSGIQQDTKKQESDNPEKARG. Residues 342–352 show a composition bias toward polar residues; sequence GSSTNYSGIQQ. Basic and acidic residues predominate over residues 353 to 367; sequence DTKKQESDNPEKARG.

This sequence belongs to the DNA mismatch repair MutL/HexB family.

This protein is involved in the repair of mismatches in DNA. It is required for dam-dependent methyl-directed DNA mismatch repair. May act as a 'molecular matchmaker', a protein that promotes the formation of a stable complex between two or more DNA-binding proteins in an ATP-dependent manner without itself being part of a final effector complex. This is DNA mismatch repair protein MutL from Kosmotoga olearia (strain ATCC BAA-1733 / DSM 21960 / TBF 19.5.1).